The sequence spans 116 residues: Movement protein TGB2 (116 aa).

The Cytoplasmic portion of the chain corresponds to 1-11 (MPLTPPPNPQK). The helical transmembrane segment at 12–32 (TYQIAILALGLVLLAFVLISD) threads the bilayer. Residues 33–77 (HSPKVGDHLHNLPFGGEYKDGTKSIKYFQRPNQHSLSKTLAKSHN) are Lumenal-facing. The helical transmembrane segment at 78–98 (TTIFLLILGLIVTLHGLHYFN) threads the bilayer. Topologically, residues 99–116 (NNRRVSSSLHCVLCQNKH) are cytoplasmic.

It belongs to the Tymovirales TGBp2 protein family.

The protein resides in the host endoplasmic reticulum membrane. Plays a role in viral cell-to-cell propagation, by facilitating genome transport to neighboring plant cells through plasmosdesmata,. This chain is Movement protein TGB2, found in White clover mosaic virus (strain M) (WCMV).